The following is a 1008-amino-acid chain: Probable transport protein MmpL10 (1008 aa).

The next 12 membrane-spanning stretches (helical) occupy residues 23 to 43 (WPWV…MTVP), 202 to 222 (IELV…RNPI), 225 to 245 (LLPL…VSGV), 257 to 277 (MIVL…VFLI), 301 to 321 (ALIS…ITFL), 340 to 360 (IGIA…LVLA), 389 to 409 (VAYL…ASLV), 835 to 855 (DLQL…MALL), 862 to 882 (IYLV…CVLV), 895 to 915 (VPGL…MLLA), 940 to 960 (VITA…LSSI), and 961 to 981 (ATVV…TFIV).

The protein belongs to the resistance-nodulation-cell division (RND) (TC 2.A.6) family. MmpL subfamily.

The protein localises to the cell membrane. This chain is Probable transport protein MmpL10 (mmpL10), found in Mycobacterium leprae (strain TN).